The sequence spans 470 residues: Mitogen-activated protein kinase 15 (470 aa).

In terms of domain architecture, Protein kinase spans phenylalanine 13–valine 306. Residues leucine 19–valine 27 and lysine 42 contribute to the ATP site. Aspartate 137 functions as the Proton acceptor in the catalytic mechanism. At threonine 178 the chain carries Phosphothreonine. The short motif at threonine 178 to tyrosine 180 is the TXY element. Tyrosine 180 carries the phosphotyrosine modification. The tract at residues proline 362 to serine 445 is disordered. The span at methionine 394–serine 406 shows a compositional bias: low complexity. Basic and acidic residues predominate over residues leucine 409–glycine 426.

It belongs to the protein kinase superfamily. CMGC Ser/Thr protein kinase family. MAP kinase subfamily. It depends on Mg(2+) as a cofactor. In terms of processing, dually phosphorylated on Thr-178 and Tyr-180, which activates the enzyme. Expressed in the URX neuron and in many other head sensory neurons. Isoform a: Expressed in head and tail ciliated sensory neurons, and in mid-body neurons. Isoform c: Expressed in head and tail ciliated sensory neurons, and in mid-body neurons.

It localises to the cell projection. It is found in the cilium. Its subcellular location is the cilium membrane. The protein resides in the cytoplasm. The protein localises to the cytoskeleton. It localises to the cilium axoneme. It is found in the cilium basal body. Its subcellular location is the cell junction. The protein resides in the perikaryon. The protein localises to the dendrite. The catalysed reaction is L-seryl-[protein] + ATP = O-phospho-L-seryl-[protein] + ADP + H(+). The enzyme catalyses L-threonyl-[protein] + ATP = O-phospho-L-threonyl-[protein] + ADP + H(+). With respect to regulation, activated by threonine and tyrosine phosphorylation. Its function is as follows. Atypical MAPK protein. Regulates primary cilium formation in sensory neurons and the localization of ciliary proteins involved in cilium structure, transport, and signaling. Acts in dopamine (DA) neurons to support synaptic membrane dat-1 availability via activation of rho-1 thereby sustaining normal levels of DA clearance. Plays a role in male mating behavior, probably in part through regulating the localization of the polycystin pkd-2. Functions postembryonically in the URX sensory neurons to constrain URX dendrite growth throughout lifetime, probably by restricting expansion of the subcellular sensory compartment at the dendrite ending. This chain is Mitogen-activated protein kinase 15, found in Caenorhabditis elegans.